We begin with the raw amino-acid sequence, 663 residues long: Transforming growth factor beta activator LRRC32 (663 aa).

The N-terminal stretch at 1-17 (MSHQILLLLAMLTLGLA) is a signal peptide. Topologically, residues 18-628 (ISQRREQVPC…CEKGGLKNVN (611 aa)) are extracellular. The LRRNT domain maps to 22 to 49 (REQVPCRTVNKEALCHGLGLLQVPSVLS). LRR repeat units follow at residues 49 to 72 (SLDI…PLGF), 73 to 96 (YTAL…VFQA), 98 to 123 (PYLE…GLGR), 125 to 148 (PLLV…LLGE), 149 to 172 (TPRL…TFWG), 174 to 196 (PAVE…AFEA), 197 to 220 (LPHL…SLQQ), 222 to 241 (QVLD…PEPQ), 243 to 267 (QFQL…VFPR), and 269 to 287 (IYLN…LPRG). A glycan (N-linked (GlcNAc...) asparagine) is linked at N204. N-linked (GlcNAc...) asparagine glycosylation is found at N272, N305, and N309. The interval 291–311 (LHAPSEGWSASPLSNPSRNAS) is disordered. Positions 301 to 311 (SPLSNPSRNAS) are enriched in polar residues. LRR repeat units lie at residues 315 to 338 (LSQL…FLEH), 340 to 362 (TSLR…QVDS), 363 to 386 (LPCL…TKVL), 387 to 409 (GSLQ…TFAS), 411 to 433 (ASLQ…AEPG), 443 to 466 (IPTL…SFLH), 468 to 489 (PLTE…ALVG), 491 to 514 (EASL…LPCF), 515 to 539 (LRLK…AVSL), 541 to 559 (VLDL…AMGG), and 561 to 584 (ETSL…WLAA). N-linked (GlcNAc...) asparagine glycosylation occurs at N346. Residue N546 is glycosylated (N-linked (GlcNAc...) asparagine). Residues 572–621 (NPLSCCGNGWLAAQLHQGRVDVDATQDLICRFGSQEELSLSLVRPEDCEK) enclose the LRRCT domain. The chain crosses the membrane as a helical span at residues 629–649 (LILLLSFTLVSAIVLTTLATI). At 650-663 (CFLRRQKLSQQYKA) the chain is on the cytoplasmic side.

The protein belongs to the LRRC32/LRRC33 family. As to quaternary structure, interacts with TGFB1; associates via disulfide bonds with the Latency-associated peptide chain (LAP) regulatory chain of TGFB1, leading to regulate activation of TGF-beta-1. Interacts with TGFB2. Interacts with TGFB3; associates via disulfide bonds with the Latency-associated peptide chain (LAP) regulatory chain of TGFB3, leading to regulate activation of TGF-beta-3. Interacts with LAPTM4B; decreases TGFB1 production in regulatory T-cells. In terms of tissue distribution, present in medial edge epithelial cells at 14.5 dpc (at protein level).

The protein resides in the cell membrane. It is found in the cell surface. Functionally, key regulator of transforming growth factor beta (TGFB1, TGFB2 and TGFB3) that controls TGF-beta activation by maintaining it in a latent state during storage in extracellular space. Associates specifically via disulfide bonds with the Latency-associated peptide (LAP), which is the regulatory chain of TGF-beta, and regulates integrin-dependent activation of TGF-beta. Able to outcompete LTBP1 for binding to LAP regulatory chain of TGF-beta. Controls activation of TGF-beta-1 (TGFB1) on the surface of activated regulatory T-cells (Tregs). Required for epithelial fusion during palate development by regulating activation of TGF-beta-3 (TGFB3). This chain is Transforming growth factor beta activator LRRC32, found in Mus musculus (Mouse).